The sequence spans 183 residues: Dual-action ribosomal maturation protein DarP (183 aa).

The protein belongs to the DarP family.

It localises to the cytoplasm. Functionally, member of a network of 50S ribosomal subunit biogenesis factors which assembles along the 30S-50S interface, preventing incorrect 23S rRNA structures from forming. Promotes peptidyl transferase center (PTC) maturation. This chain is Dual-action ribosomal maturation protein DarP, found in Shigella flexneri.